The chain runs to 150 residues: MGKRVLAGGVFDILHPGHVAFLEEARKIAGKNGELVVVVARDETVRRLKRTPIVPEEQRVRMVSALKPVDRAILGHPRDFSITLKTVKPDVVVLGPDQDIDEKEVERWAERAGVDCEVRRIEKYERCPLDSTIKIVKRVIELWKRGELRV.

ATP is bound by residues 10–11 (VF), 15–18 (HPGH), aspartate 97, and tyrosine 124.

The protein belongs to the archaeal FAD synthase family. As to quaternary structure, homodimer. Requires a divalent metal cation as cofactor.

It carries out the reaction FMN + ATP + H(+) = FAD + diphosphate. Its pathway is cofactor biosynthesis; FAD biosynthesis; FAD from FMN: step 1/1. In terms of biological role, catalyzes the transfer of the AMP portion of ATP to flavin mononucleotide (FMN) to produce flavin adenine dinucleotide (FAD) coenzyme. This is FAD synthase from Methanopyrus kandleri (strain AV19 / DSM 6324 / JCM 9639 / NBRC 100938).